A 466-amino-acid polypeptide reads, in one-letter code: Citrate synthase, mitochondrial (466 aa).

The transit peptide at 1–27 (MALLTAAARLLGAKNSSCLVLAARHAS) directs the protein to the mitochondrion. Positions 2–21 (ALLTAAARLLGAKNSSCLVL) match the SIFI-degron motif. Lys57 is subject to N6-succinyllysine. Lys76 carries the N6-acetyllysine; alternate modification. Lys76 is modified (N6-succinyllysine; alternate). Lys103 and Lys193 each carry N6-succinyllysine. Ser226 carries the post-translational modification Phosphoserine. His301 is an active-site residue. Lys321 and Lys327 each carry N6-acetyllysine; alternate. Residues Lys321 and Lys327 each carry the N6-succinyllysine; alternate modification. Residue His347 is part of the active site. Position 356 (Arg356) interacts with oxaloacetate. Lys375 is subject to N6-acetyllysine; alternate. Lys375 is modified (N6-succinyllysine; alternate). Lys382 is subject to N6-acetyllysine. Lys393 carries the N6-acetyllysine; alternate modification. Position 393 is an N6-succinyllysine; alternate (Lys393). Lys395 is modified (N6,N6,N6-trimethyllysine). The active site involves Asp402. 2 residues coordinate oxaloacetate: Arg428 and Arg448. Lys450 is modified (N6-succinyllysine). Lys459 bears the N6-acetyllysine; alternate mark. Position 459 is an N6-succinyllysine; alternate (Lys459).

This sequence belongs to the citrate synthase family. As to quaternary structure, homodimer. Post-translationally, methylated. Trimethylation at Lys-395 by CSKMT decreases citrate synthase activity. In terms of processing, in response to mitochondrial stress, the precursor protein is ubiquitinated by the SIFI complex in the cytoplasm before mitochondrial import, leading to its degradation. Within the SIFI complex, UBR4 initiates ubiquitin chain that are further elongated or branched by KCMF1. In terms of tissue distribution, expressed in the head region and flagellum of epididymal sperm.

The protein resides in the mitochondrion matrix. The enzyme catalyses oxaloacetate + acetyl-CoA + H2O = citrate + CoA + H(+). Its pathway is carbohydrate metabolism; tricarboxylic acid cycle; isocitrate from oxaloacetate: step 1/2. Key enzyme of the Krebs tricarboxylic acid cycle which catalyzes the synthesis of citrate from acetyl coenzyme A and oxaloacetate. This Rattus norvegicus (Rat) protein is Citrate synthase, mitochondrial (Cs).